We begin with the raw amino-acid sequence, 242 residues long: UPF0157 protein PA4798 (242 aa).

The tract at residues 215-242 (AGAESTPGGPADTAYFESLRSRVSKPQD) is disordered.

The protein belongs to the UPF0157 (GrpB) family.

This chain is UPF0157 protein PA4798, found in Pseudomonas aeruginosa (strain ATCC 15692 / DSM 22644 / CIP 104116 / JCM 14847 / LMG 12228 / 1C / PRS 101 / PAO1).